Here is a 330-residue protein sequence, read N- to C-terminus: uncharacterized protein (330 aa).

The region spanning 4–242 (LSIQNLVVEY…AGEVLFEQST (239 aa)) is the ABC transporter domain. 40-47 (GPSGCGKT) contacts ATP. 210-330 (DRVVELTPDF…LIEHRALAND (121 aa)) contributes to the a nucleoside 3',5'-cyclic phosphate binding site.

Belongs to the ABC transporter superfamily. In terms of assembly, the complex is composed of two ATP-binding proteins (MT0079), two transmembrane proteins (MT0078) and a solute-binding protein.

Probably part of an ABC transporter complex. Probably responsible for energy coupling to the transport system. This is an uncharacterized protein from Mycobacterium tuberculosis (strain CDC 1551 / Oshkosh).